The following is a 996-amino-acid chain: MATGLTPPPQPIKRPPKAVTWIIGIIALLVLVTPLTVGFYTDWLWFGEVDYRGVFSTVIVTRIILFIVFALLAGFVTWLAGYFTIRLRPDDLTAFDAESPVFQYRQMIENSLRRILIIVPIFVGLLGGLVGQRSWQTVQLFLNREPFGVEDQQFGMDYGFYAFTLPMLRLITSSLSTLLVVAFIIALVGHYLLGGIRPGNQMTGQKAFISRGARAQLAVTAGLWMLVRVATYWLERYDLLTRENATFTGAGYTDINAHLPAKIILMVISIIVAVAFFSAIFLRDLRIPGLAVVLLVLSSVVVGAVWPLMLERFSVQPNRAEKESEYISRNIESTRFAYGITDDEVTYIENWGAGGATNAEVAADEATISNIRLLDPQILSPTFTQQQQLRNFYGFPEQLAMDRYEVDGELRDFVVAARELDPNSLQQNQQDWINRHTVYTHGNGFIAAQANQVDEVARDVGSTRGGYPVYTVSDLQTNARAAESEDAEELGIMVEQPRIYYGPLIASAADGKDYAIVGDTGDGPVEYDTDSTSYTYDGEGGVGIGNLFNRAAFALRYQEMNMILSDRVGSESKILFERDPRTRVEKVAPWLTTDSKSYPAVIDGSIKWIVDGYTTLSSLPYATRTSLTEATLDSVVVDNFQQPLLTEEVGYIRNSVKAVVDAYDGTVELYEFDSEDPVLKAWRGVFPDVVQPESEISNELRDHLRYPEDMFKVQREMLSRYHVEDAGTFFTNDAFWSVPNDPTAPEGRQEMKQPPYYVVAADPDTGESSFQLITPFRGLQREFLSAHMTASSDPDNFGKITVRVLPTGAVTQGPKQAQDAMMSSDQVAQDQTLWRGSNDLFNGNLLTLPVGGGEILYVEPIYSQRRDQESAFPKLLRMLVFYKGQVGYAPTIAEALSQVGIDPAAAQDIEVVEEDGTVTVPDVNATEDADATTDGEDETPAAPAAPAGSEAEGIEAINEALRNLEAARDGSFEEYGRALDALDRAVESYQGAGTAE.

7 helical membrane-spanning segments follow: residues 19–39, 63–83, 115–135, 176–196, 212–234, 262–282, and 290–310; these read VTWI…TVGF, IILF…AGYF, ILII…QRSW, STLL…LGGI, GARA…TYWL, KIIL…AIFL, and LAVV…PLML. The tract at residues 920 to 950 is disordered; sequence VPDVNATEDADATTDGEDETPAAPAAPAGSE. Residues 925 to 939 show a composition bias toward acidic residues; the sequence is ATEDADATTDGEDET. Low complexity predominate over residues 940 to 950; it reads PAAPAAPAGSE.

This sequence belongs to the UPF0182 family.

Its subcellular location is the cell membrane. The polypeptide is UPF0182 protein CE0802 (Corynebacterium efficiens (strain DSM 44549 / YS-314 / AJ 12310 / JCM 11189 / NBRC 100395)).